The primary structure comprises 196 residues: Superantigen-like protein 11 (196 aa).

The interval Leu-65 to Tyr-167 is sialyl Lewis X-binding.

It belongs to the staphylococcal/streptococcal toxin family. Homodimer (via its C-terminal domain). Interacts with host FCAR and SELPLG (via sialyl Lewis X).

Its subcellular location is the secreted. Functionally, secreted protein that plays a role in the inhibition of host immune system. Targets myeloid cells such as monocytes or granulocytes through binding with sialyllactosamine-containing glycoproteins. Prevents initial rolling of neutrophils toward the site of infection by interacting with host SELPLG. Disrupts neutrophil motility by induction of cell adhesion via interacting with glycans but independently of SELPLG. The protein is Superantigen-like protein 11 of Staphylococcus aureus.